A 276-amino-acid chain; its full sequence is MAIKKYKPTSNGRRGMTVLDFSEITTDQPEKSLLAPLKKKAGRNNQGKITVRHQGGGHKRQYRIIDFKRDKDGIPGRVATIEYDPNRSANIALIHYADGEKRYIIAPKNLKVGMEIMSGPDADIKVGNALPLENIPVGTFVHNIELKPGRGGQLVRAAGTSAQVLGKEGKYVIVRLASGEVRMILGACRATVGEVGNEQHELVKIGKAGRARWLGIRPTVRGSVMNPVDHPHGGGEGKAPIGRKSPMTPWGKPTLGFKTRKKKNKSDKFIIRRRKK.

The disordered stretch occupies residues 224 to 276; that stretch reads VMNPVDHPHGGGEGKAPIGRKSPMTPWGKPTLGFKTRKKKNKSDKFIIRRRKK. Residues 258–276 are compositionally biased toward basic residues; the sequence is KTRKKKNKSDKFIIRRRKK.

This sequence belongs to the universal ribosomal protein uL2 family. In terms of assembly, part of the 50S ribosomal subunit. Forms a bridge to the 30S subunit in the 70S ribosome.

In terms of biological role, one of the primary rRNA binding proteins. Required for association of the 30S and 50S subunits to form the 70S ribosome, for tRNA binding and peptide bond formation. It has been suggested to have peptidyltransferase activity; this is somewhat controversial. Makes several contacts with the 16S rRNA in the 70S ribosome. This chain is Large ribosomal subunit protein uL2, found in Geobacillus sp. (strain WCH70).